Here is a 201-residue protein sequence, read N- to C-terminus: MSRYRGPRFKKIRRLGALPGLTNKKPRAGSDLRNQSRSGKKSQYRIRLEEKQKLRFHYGLTERQLLKYVRIARKAKGSTGQVLLQLLEMRLDNILFRLGMASTIPAARQLVNHRHILVNGRIVDIPSYRCKPRDIITAKDEQKSKALIQISLDSSPHEELPNHLTLHPFQYKGLVNQIIDSKWVGLKINELLVVEYYSRQT.

The tract at residues 20-44 (GLTNKKPRAGSDLRNQSRSGKKSQY) is disordered. One can recognise an S4 RNA-binding domain in the interval 89 to 150 (MRLDNILFRL…EQKSKALIQI (62 aa)).

The protein belongs to the universal ribosomal protein uS4 family. Part of the 30S ribosomal subunit. Contacts protein S5. The interaction surface between S4 and S5 is involved in control of translational fidelity.

It localises to the plastid. Its subcellular location is the chloroplast. Functionally, one of the primary rRNA binding proteins, it binds directly to 16S rRNA where it nucleates assembly of the body of the 30S subunit. Its function is as follows. With S5 and S12 plays an important role in translational accuracy. The chain is Small ribosomal subunit protein uS4c (rps4) from Nicotiana tomentosiformis (Tobacco).